The chain runs to 224 residues: MESGAYGAANAGGSFDLRRYVSQPQVVTRLVSMVLALIVFSCIFGEGYINLHSSDQLHCVFNRNEDACRYGSAIGVLAFLASAFFLVVDAFFSQISNATDRKYLVIGDLLFSALWTFLWFVGFCFLTNQWAATKPDDVLVGADSARAAITFSFFSIFSWGVLASLAYQRYKAGVDAFIQNYVDPTPDPTTAYASYPSASVENYQQPPFTQNVETTEGYQPPPVY.

Methionine 1 is modified (N-acetylmethionine). Serine 3 carries the post-translational modification Phosphoserine. Positions tyrosine 20–lysine 171 constitute an MARVEL domain. The next 4 membrane-spanning stretches (helical) occupy residues leucine 30–asparagine 50, alanine 73–serine 93, valine 105–phenylalanine 125, and alanine 147–tyrosine 167.

The protein belongs to the synaptogyrin family. May be tyrosine phosphorylated by Src. As to expression, ubiquitously expressed with lower expression in brain (at protein level).

The protein localises to the cytoplasmic vesicle membrane. It localises to the cytoplasmic vesicle. The protein resides in the secretory vesicle. Its subcellular location is the synaptic vesicle membrane. Its function is as follows. May play a role in regulated exocytosis. In neuronal cells, modulates the localization of synaptophysin/SYP into synaptic-like microvesicles and may therefore play a role in the formation and/or the maturation of this vesicles. May also play a role in GLUT4 storage and transport to the plasma membrane. This Rattus norvegicus (Rat) protein is Synaptogyrin-2.